A 795-amino-acid polypeptide reads, in one-letter code: Phenylalanine--tRNA ligase beta subunit (795 aa).

The 110-residue stretch at 39 to 148 (AGSFHGVVVG…ADAPIGTDIR (110 aa)) folds into the tRNA-binding domain. The 76-residue stretch at 401–476 (PKRATITLRR…RVYGYNNIPD (76 aa)) folds into the B5 domain. Mg(2+)-binding residues include Asp454, Asp460, Glu463, and Glu464. The FDX-ACB domain occupies 701–794 (SRFPANRRDI…LKERFQASLR (94 aa)).

Belongs to the phenylalanyl-tRNA synthetase beta subunit family. Type 1 subfamily. In terms of assembly, tetramer of two alpha and two beta subunits. Requires Mg(2+) as cofactor.

The protein resides in the cytoplasm. The enzyme catalyses tRNA(Phe) + L-phenylalanine + ATP = L-phenylalanyl-tRNA(Phe) + AMP + diphosphate + H(+). The polypeptide is Phenylalanine--tRNA ligase beta subunit (Shigella sonnei (strain Ss046)).